Here is a 622-residue protein sequence, read N- to C-terminus: Chaperone protein HscA homolog (622 aa).

This sequence belongs to the heat shock protein 70 family.

Chaperone involved in the maturation of iron-sulfur cluster-containing proteins. Has a low intrinsic ATPase activity which is markedly stimulated by HscB. This chain is Chaperone protein HscA homolog, found in Burkholderia mallei (strain NCTC 10247).